We begin with the raw amino-acid sequence, 583 residues long: Arginine--tRNA ligase (583 aa).

The 'HIGH' region motif lies at 131–141 (ANPTGPMHVGH).

The protein belongs to the class-I aminoacyl-tRNA synthetase family. As to quaternary structure, monomer.

The protein localises to the cytoplasm. The catalysed reaction is tRNA(Arg) + L-arginine + ATP = L-arginyl-tRNA(Arg) + AMP + diphosphate. This is Arginine--tRNA ligase from Parvibaculum lavamentivorans (strain DS-1 / DSM 13023 / NCIMB 13966).